A 263-amino-acid polypeptide reads, in one-letter code: Ribonuclease HII (263 aa).

The RNase H type-2 domain occupies 71–262 (QAIAGIDEVG…VKSMCCDSTN (192 aa)). Positions 77, 78, and 172 each coordinate a divalent metal cation.

The protein belongs to the RNase HII family. It depends on Mn(2+) as a cofactor. Mg(2+) is required as a cofactor.

Its subcellular location is the cytoplasm. The enzyme catalyses Endonucleolytic cleavage to 5'-phosphomonoester.. Functionally, endonuclease that specifically degrades the RNA of RNA-DNA hybrids. The protein is Ribonuclease HII of Streptococcus pyogenes serotype M3 (strain ATCC BAA-595 / MGAS315).